A 299-amino-acid polypeptide reads, in one-letter code: Delta-9 desaturase-like 2 protein (299 aa).

The helical transmembrane segment at 55–75 (WEAFRFGIILAILTNLCITFS) threads the bilayer. Positions 77–82 (HRNLTH) match the Histidine box-1 motif. A Histidine box-2 motif is present at residues 114–118 (HRFHH). A helical transmembrane segment spans residues 174-194 (LVLHILAFWTLIYLWGGLPYL). A Histidine box-3 motif is present at residues 246-250 (HNNHH). The chain crosses the membrane as a helical span at residues 262–282 (WYQLDITWYLIWFFQALGLAT).

The protein belongs to the fatty acid desaturase type 1 family. Fe cation serves as cofactor.

Its subcellular location is the endoplasmic reticulum membrane. It participates in lipid metabolism; polyunsaturated fatty acid biosynthesis. The polypeptide is Delta-9 desaturase-like 2 protein (Arabidopsis thaliana (Mouse-ear cress)).